The primary structure comprises 88 residues: MKFKPLGERALVKLVEREEKTASGIVLPDTAKEKPQTAEVIAVGDSEDIKVKEGDVVVFAKYSGTEISLNGDDYMILDADDILGVVEE.

This sequence belongs to the GroES chaperonin family. In terms of assembly, heptamer of 7 subunits arranged in a ring. Interacts with the chaperonin GroEL.

It localises to the cytoplasm. In terms of biological role, together with the chaperonin GroEL, plays an essential role in assisting protein folding. The GroEL-GroES system forms a nano-cage that allows encapsulation of the non-native substrate proteins and provides a physical environment optimized to promote and accelerate protein folding. GroES binds to the apical surface of the GroEL ring, thereby capping the opening of the GroEL channel. The protein is Co-chaperonin GroES of Rubrobacter xylanophilus (strain DSM 9941 / JCM 11954 / NBRC 16129 / PRD-1).